Here is a 459-residue protein sequence, read N- to C-terminus: Ribulose bisphosphate carboxylase (459 aa).

Asn-111 lines the substrate pocket. The active-site Proton acceptor is Lys-166. Lys-168 serves as a coordination point for substrate. Mg(2+)-binding residues include Lys-191, Asp-193, and Glu-194. Lys-191 carries the post-translational modification N6-carboxylysine. His-287 serves as the catalytic Proton acceptor. Arg-288, His-321, and Ser-368 together coordinate substrate.

This sequence belongs to the RuBisCO large chain family. Type II subfamily. As to quaternary structure, homodimer. It depends on Mg(2+) as a cofactor.

It catalyses the reaction 2 (2R)-3-phosphoglycerate + 2 H(+) = D-ribulose 1,5-bisphosphate + CO2 + H2O. The catalysed reaction is D-ribulose 1,5-bisphosphate + O2 = 2-phosphoglycolate + (2R)-3-phosphoglycerate + 2 H(+). Its function is as follows. RuBisCO catalyzes two reactions: the carboxylation of D-ribulose 1,5-bisphosphate, the primary event in carbon dioxide fixation, as well as the oxidative fragmentation of the pentose substrate. Both reactions occur simultaneously and in competition at the same active site. This chain is Ribulose bisphosphate carboxylase, found in Paramagnetospirillum magnetotacticum (Aquaspirillum magnetotacticum).